A 305-amino-acid polypeptide reads, in one-letter code: Olfactory receptor 9G9 (305 aa).

At 1–27 (MQRSNHTVTEFILLGFTTDPGMQLGLF) the chain is on the extracellular side. N-linked (GlcNAc...) asparagine glycosylation is present at Asn-5. Residues 28 to 48 (VVFLGVYSLTVVGNSTLIVLI) traverse the membrane as a helical segment. Residues 49–64 (CNDSHLHTPMYFVVGN) lie on the Cytoplasmic side of the membrane. The helical transmembrane segment at 65–85 (LSFLDLWYSSVYTPKILVICI) threads the bilayer. The Extracellular segment spans residues 86 to 96 (SEDKSISFAGC). Cys-96 and Cys-178 are disulfide-bonded. The chain crosses the membrane as a helical span at residues 97-117 (LCQFFFSAGLAYSECCLLAAM). Residues 118–138 (AYDRYVAISKPLLYAQAMSIK) lie on the Cytoplasmic side of the membrane. A helical transmembrane segment spans residues 139-159 (LCALLVAVSYCGGFINSSIIT). The Extracellular portion of the chain corresponds to 160 to 200 (KKTFSFNFCCENIIDDFFCDLLPLVKLACGEKGCYKFLMYF). The chain crosses the membrane as a helical span at residues 201 to 221 (LLASNVICPAVLILASYLFII). Residues 222–239 (TSVLRISSSQGRLKAFST) are Cytoplasmic-facing. The helical transmembrane segment at 240–260 (CSSHLTSVTLYYGSILYIYAL) threads the bilayer. The Extracellular segment spans residues 261-271 (PRSSYSFDMDK). Residues 272-291 (IVSTFYTEVLPMLNPMIYSL) form a helical membrane-spanning segment. Residues 292–305 (RNKDVKEALKKLLP) lie on the Cytoplasmic side of the membrane.

This sequence belongs to the G-protein coupled receptor 1 family.

The protein resides in the cell membrane. Functionally, odorant receptor. The sequence is that of Olfactory receptor 9G9 (OR9G9) from Homo sapiens (Human).